An 80-amino-acid chain; its full sequence is Large ribosomal subunit protein bL28 (80 aa).

A disordered region spans residues 1 to 23; sequence MARVCQITGKKTRTGNNVSHANN.

This sequence belongs to the bacterial ribosomal protein bL28 family.

The sequence is that of Large ribosomal subunit protein bL28 from Cytophaga hutchinsonii (strain ATCC 33406 / DSM 1761 / CIP 103989 / NBRC 15051 / NCIMB 9469 / D465).